We begin with the raw amino-acid sequence, 352 residues long: Ribosomal RNA large subunit methyltransferase M (352 aa).

Residues S184, 217–220 (APGG), D236, D256, and D272 each bind S-adenosyl-L-methionine. K301 (proton acceptor) is an active-site residue.

It belongs to the class I-like SAM-binding methyltransferase superfamily. RNA methyltransferase RlmE family. RlmM subfamily. In terms of assembly, monomer.

The protein localises to the cytoplasm. The enzyme catalyses cytidine(2498) in 23S rRNA + S-adenosyl-L-methionine = 2'-O-methylcytidine(2498) in 23S rRNA + S-adenosyl-L-homocysteine + H(+). In terms of biological role, catalyzes the 2'-O-methylation at nucleotide C2498 in 23S rRNA. The sequence is that of Ribosomal RNA large subunit methyltransferase M from Pseudomonas aeruginosa (strain LESB58).